We begin with the raw amino-acid sequence, 188 residues long: Probable manganese efflux pump MntP (188 aa).

The next 5 helical transmembrane spans lie at 3–23, 66–86, 106–128, 143–163, and 168–188; these read ITAT…ASIG, LEWN…RMII, WLLV…GLAF, ATLI…SIIG, and ILGG…HFHG.

This sequence belongs to the MntP (TC 9.B.29) family.

The protein resides in the cell inner membrane. Its function is as follows. Probably functions as a manganese efflux pump. This is Probable manganese efflux pump MntP from Shigella flexneri serotype 5b (strain 8401).